Consider the following 381-residue polypeptide: E3 ubiquitin-protein ligase RNF13 (381 aa).

The N-terminal stretch at 1-34 is a signal peptide; that stretch reads MLLSIGMLMLSATQVYTILTVQLFAFLNLLPVEA. Residues 35–182 are Lumenal-facing; sequence DILAYNFENA…VPEFSLPLEY (148 aa). The region spanning 65 to 160 is the PA domain; that stretch reads KGFLINSKPE…GESSANSLKD (96 aa). The N-linked (GlcNAc...) asparagine glycan is linked to Asn-88. A helical transmembrane segment spans residues 183 to 203; the sequence is YLIPFLIIVGICLILIVIFMI. The Cytoplasmic portion of the chain corresponds to 204–381; it reads TKFVQDRHRA…ERDYNIANTV (178 aa). The RING-type; atypical zinc-finger motif lies at 240–282; it reads CAICLDEYEDGDKLRILPCSHAYHCKCVDPWLTKTKKTCPVCK. The segment at 285 to 381 is disordered; that stretch reads VVPSQGDSDS…ERDYNIANTV (97 aa). 2 stretches are compositionally biased toward acidic residues: residues 292–304 and 339–357; these read SDSD…EENE and SDYE…AENE.

Interacts with ERN1. Post-translationally, autoubiquitinated. Widely expressed (at protein level). In normal pancreas, expressed in islets, but not in ducts, nor in acini (at protein level).

It is found in the endoplasmic reticulum membrane. It localises to the late endosome membrane. Its subcellular location is the lysosome membrane. The protein resides in the nucleus inner membrane. The enzyme catalyses S-ubiquitinyl-[E2 ubiquitin-conjugating enzyme]-L-cysteine + [acceptor protein]-L-lysine = [E2 ubiquitin-conjugating enzyme]-L-cysteine + N(6)-ubiquitinyl-[acceptor protein]-L-lysine.. It functions in the pathway protein modification; protein ubiquitination. E3 ubiquitin-protein ligase that regulates cell proliferation. Involved in apoptosis regulation. Mediates ER stress-induced activation of JNK signaling pathway and apoptosis by promoting ERN1 activation and splicing of XBP1 mRNA. Also involved in protein trafficking and localization. In Homo sapiens (Human), this protein is E3 ubiquitin-protein ligase RNF13.